The chain runs to 109 residues: Aquaporin-2 (109 aa).

The Cytoplasmic segment spans residues 1-6; sequence SVAFSR. Residues 7–27 form a helical membrane-spanning segment; that stretch reads AVFAEFLATLLFVFFGLGSAL. Over 28–35 the chain is Extracellular; the sequence is NWPQALPS. The chain crosses the membrane as a helical span at residues 36-54; that stretch reads VLQIAMAFGLGIGTLVQAL. Residues 55-59 lie on the Cytoplasmic side of the membrane; that stretch reads GHVSG. Positions 60–69 form an intramembrane region, discontinuously helical; that stretch reads AHINPAVTVA. An NPA 1 motif is present at residues 63 to 65; the sequence is NPA. The Cytoplasmic portion of the chain corresponds to 70-80; that stretch reads CLVGCHVSFLR. Residues 81 to 102 form a helical membrane-spanning segment; it reads AAFYVAAQLLGAVAGAALLHEI. Over 103–109 the chain is Extracellular; that stretch reads TPPHVRG.

The protein belongs to the MIP/aquaporin (TC 1.A.8) family. Homotetramer. Serine phosphorylation is necessary and sufficient for expression at the apical membrane. Endocytosis is not phosphorylation-dependent. Post-translationally, N-glycosylated.

The protein localises to the apical cell membrane. The protein resides in the basolateral cell membrane. Its subcellular location is the cell membrane. It is found in the cytoplasmic vesicle membrane. It localises to the golgi apparatus. The protein localises to the trans-Golgi network membrane. The catalysed reaction is H2O(in) = H2O(out). The enzyme catalyses glycerol(in) = glycerol(out). In terms of biological role, forms a water-specific channel that provides the plasma membranes of renal collecting duct with high permeability to water, thereby permitting water to move in the direction of an osmotic gradient. Plays an essential role in renal water homeostasis. Could also be permeable to glycerol. The sequence is that of Aquaporin-2 from Canis lupus familiaris (Dog).